The primary structure comprises 275 residues: ATP synthase subunit delta (275 aa).

The protein belongs to the ATPase delta chain family. F-type ATPases have 2 components, F(1) - the catalytic core - and F(0) - the membrane proton channel. F(1) has five subunits: alpha(3), beta(3), gamma(1), delta(1), epsilon(1). F(0) has three main subunits: a(1), b(2) and c(10-14). The alpha and beta chains form an alternating ring which encloses part of the gamma chain. F(1) is attached to F(0) by a central stalk formed by the gamma and epsilon chains, while a peripheral stalk is formed by the delta and b chains.

It is found in the cell membrane. Functionally, f(1)F(0) ATP synthase produces ATP from ADP in the presence of a proton or sodium gradient. F-type ATPases consist of two structural domains, F(1) containing the extramembraneous catalytic core and F(0) containing the membrane proton channel, linked together by a central stalk and a peripheral stalk. During catalysis, ATP synthesis in the catalytic domain of F(1) is coupled via a rotary mechanism of the central stalk subunits to proton translocation. In terms of biological role, this protein is part of the stalk that links CF(0) to CF(1). It either transmits conformational changes from CF(0) to CF(1) or is implicated in proton conduction. In Bifidobacterium adolescentis (strain ATCC 15703 / DSM 20083 / NCTC 11814 / E194a), this protein is ATP synthase subunit delta.